The following is a 402-amino-acid chain: Multidrug resistance protein MdtH (402 aa).

11 consecutive transmembrane segments (helical) span residues 13-33 (YFLL…FPLI), 34-54 (SIRF…ALGL), 99-116 (PWVL…GTLF), 139-159 (ILMM…SWLL), 165-185 (LVCS…AWYL), 214-234 (VLTL…LPIM), 243-263 (AAVK…LYPI), 277-297 (LMAG…TSSL), 300-320 (LFTL…ARET), 340-360 (LGLA…FDAG), and 369-389 (PWLM…WQFS).

Belongs to the major facilitator superfamily. DHA1 family. MdtH (TC 2.A.1.2.21) subfamily.

It localises to the cell inner membrane. This chain is Multidrug resistance protein MdtH, found in Klebsiella pneumoniae subsp. pneumoniae (strain ATCC 700721 / MGH 78578).